A 93-amino-acid chain; its full sequence is MYTIDLILRHVPMPVSIERKESAAAMAVYQQIQQAMASGTPTFLELTCDRQVGKKLTVLTSEIVAVQMADKDAPSSTISRGGFFAQLVQQTSN.

This sequence belongs to the UPF0367 family.

In Thermosynechococcus vestitus (strain NIES-2133 / IAM M-273 / BP-1), this protein is UPF0367 protein tsr0804.